The sequence spans 278 residues: Biotin synthase (278 aa).

Residues 1 to 227 form the Radical SAM core domain; it reads MQIMLCAISN…QSVVMVAGGR (227 aa). [4Fe-4S] cluster contacts are provided by cysteine 16, cysteine 20, and cysteine 23. Residues cysteine 60, cysteine 95, and cysteine 153 each contribute to the [2Fe-2S] cluster site.

Belongs to the radical SAM superfamily. Biotin synthase family. Homodimer. The cofactor is [4Fe-4S] cluster. It depends on [2Fe-2S] cluster as a cofactor.

It catalyses the reaction (4R,5S)-dethiobiotin + (sulfur carrier)-SH + 2 reduced [2Fe-2S]-[ferredoxin] + 2 S-adenosyl-L-methionine = (sulfur carrier)-H + biotin + 2 5'-deoxyadenosine + 2 L-methionine + 2 oxidized [2Fe-2S]-[ferredoxin]. The protein operates within cofactor biosynthesis; biotin biosynthesis; biotin from 7,8-diaminononanoate: step 2/2. Catalyzes the conversion of dethiobiotin (DTB) to biotin by the insertion of a sulfur atom into dethiobiotin via a radical-based mechanism. The protein is Biotin synthase of Campylobacter jejuni (strain RM1221).